The primary structure comprises 492 residues: Glutamyl-tRNA(Gln) amidotransferase subunit A (492 aa).

Active-site charge relay system residues include K78 and S158. The Acyl-ester intermediate role is filled by S182.

The protein belongs to the amidase family. GatA subfamily. In terms of assembly, heterotrimer of A, B and C subunits.

The catalysed reaction is L-glutamyl-tRNA(Gln) + L-glutamine + ATP + H2O = L-glutaminyl-tRNA(Gln) + L-glutamate + ADP + phosphate + H(+). Functionally, allows the formation of correctly charged Gln-tRNA(Gln) through the transamidation of misacylated Glu-tRNA(Gln) in organisms which lack glutaminyl-tRNA synthetase. The reaction takes place in the presence of glutamine and ATP through an activated gamma-phospho-Glu-tRNA(Gln). This is Glutamyl-tRNA(Gln) amidotransferase subunit A from Rhodopseudomonas palustris (strain ATCC BAA-98 / CGA009).